The chain runs to 237 residues: Uridylate kinase (237 aa).

11–14 (KLSG) provides a ligand contact to ATP. UMP is bound at residue Gly53. Residues Gly54 and Arg58 each coordinate ATP. UMP is bound by residues Asp73 and 134-141 (TGNPFFTT). ATP is bound by residues Thr161, Tyr167, and Asp170.

Belongs to the UMP kinase family. In terms of assembly, homohexamer.

It localises to the cytoplasm. The catalysed reaction is UMP + ATP = UDP + ADP. The protein operates within pyrimidine metabolism; CTP biosynthesis via de novo pathway; UDP from UMP (UMPK route): step 1/1. With respect to regulation, inhibited by UTP. Catalyzes the reversible phosphorylation of UMP to UDP. The chain is Uridylate kinase from Paraburkholderia xenovorans (strain LB400).